The primary structure comprises 165 residues: Crossover junction endodeoxyribonuclease RuvC (165 aa).

Residues aspartate 7, glutamate 66, and aspartate 138 contribute to the active site. Mg(2+) contacts are provided by aspartate 7, glutamate 66, and aspartate 138.

The protein belongs to the RuvC family. In terms of assembly, homodimer which binds Holliday junction (HJ) DNA. The HJ becomes 2-fold symmetrical on binding to RuvC with unstacked arms; it has a different conformation from HJ DNA in complex with RuvA. In the full resolvosome a probable DNA-RuvA(4)-RuvB(12)-RuvC(2) complex forms which resolves the HJ. Mg(2+) is required as a cofactor.

The protein localises to the cytoplasm. It catalyses the reaction Endonucleolytic cleavage at a junction such as a reciprocal single-stranded crossover between two homologous DNA duplexes (Holliday junction).. In terms of biological role, the RuvA-RuvB-RuvC complex processes Holliday junction (HJ) DNA during genetic recombination and DNA repair. Endonuclease that resolves HJ intermediates. Cleaves cruciform DNA by making single-stranded nicks across the HJ at symmetrical positions within the homologous arms, yielding a 5'-phosphate and a 3'-hydroxyl group; requires a central core of homology in the junction. The consensus cleavage sequence is 5'-(A/T)TT(C/G)-3'. Cleavage occurs on the 3'-side of the TT dinucleotide at the point of strand exchange. HJ branch migration catalyzed by RuvA-RuvB allows RuvC to scan DNA until it finds its consensus sequence, where it cleaves and resolves the cruciform DNA. The protein is Crossover junction endodeoxyribonuclease RuvC of Ruegeria pomeroyi (strain ATCC 700808 / DSM 15171 / DSS-3) (Silicibacter pomeroyi).